A 218-amino-acid polypeptide reads, in one-letter code: Ribonuclease S-7 (218 aa).

The signal sequence occupies residues 1-22 (MLNSPLTSVLFVLLFVLSPIYG). Residue Gln32 coordinates RNA. Cysteines 38 and 43 form a disulfide. A glycan (N-linked (GlcNAc...) asparagine) is linked at Asn49. His53 is an RNA binding site. Catalysis depends on His53, which acts as the Proton donor. A glycan (N-linked (GlcNAc...) asparagine) is linked at Asn59. Cys67 and Cys116 are disulfide-bonded. Residues 91 to 92 (DL), Phe105, 108 to 109 (HE), and 112 to 113 (KH) each bind RNA. Glu109 is a catalytic residue. His113 (proton acceptor) is an active-site residue. Residue Asn162 is glycosylated (N-linked (GlcNAc...) asparagine). Cystine bridges form between Cys177-Cys207 and Cys190-Cys201.

Belongs to the RNase T2 family.

Its subcellular location is the secreted. It is found in the extracellular space. It catalyses the reaction a ribonucleotidyl-ribonucleotide-RNA + H2O = a 3'-end 3'-phospho-ribonucleotide-RNA + a 5'-end dephospho-ribonucleoside-RNA + H(+). Functionally, self-incompatibility (SI) is the inherited ability of a flowering plant to prevent self-fertilization by discriminating between self and non-self pollen during pollination. In many species of the Solanaceae, self-incompatibility is controlled by the single, multiallelic locus S. This stylar glycoprotein is associated with expression of self-incompatibility in potato. This chain is Ribonuclease S-7, found in Nicotiana alata (Winged tobacco).